We begin with the raw amino-acid sequence, 434 residues long: Enolase (434 aa).

The interval 29-56 (SGHTGRAAVPSGASTGSREALEMRDGDK) is disordered. Basic and acidic residues predominate over residues 47–56 (EALEMRDGDK). Residue Q163 coordinates (2R)-2-phosphoglycerate. The active-site Proton donor is E205. Mg(2+) is bound by residues D242, E285, and D312. Residues K337, R366, S367, and K388 each contribute to the (2R)-2-phosphoglycerate site. The active-site Proton acceptor is K337.

Belongs to the enolase family. Homooctamer. Requires Mg(2+) as cofactor.

The protein resides in the cytoplasm. It is found in the secreted. It localises to the cell surface. It catalyses the reaction (2R)-2-phosphoglycerate = phosphoenolpyruvate + H2O. It functions in the pathway carbohydrate degradation; glycolysis; pyruvate from D-glyceraldehyde 3-phosphate: step 4/5. Catalyzes the reversible conversion of 2-phosphoglycerate (2-PG) into phosphoenolpyruvate (PEP). It is essential for the degradation of carbohydrates via glycolysis. This Nitratidesulfovibrio vulgaris (strain DSM 19637 / Miyazaki F) (Desulfovibrio vulgaris) protein is Enolase.